The primary structure comprises 681 residues: Transmembrane protein 168-A (681 aa).

9 helical membrane-spanning segments follow: residues phenylalanine 16–methionine 36, methionine 47–tyrosine 67, serine 73–leucine 93, proline 135–serine 155, leucine 156–isoleucine 176, leucine 184–leucine 204, phenylalanine 252–leucine 272, valine 281–valine 301, and leucine 346–alanine 365. Asparagine 517 is a glycosylation site (N-linked (GlcNAc...) asparagine).

The protein belongs to the TMEM168 family.

It localises to the nucleus membrane. Functionally, plays a key role in maintaining the cardiac electrical stability by modulating cell surface expression of SCN5A. The polypeptide is Transmembrane protein 168-A (tmem168a) (Danio rerio (Zebrafish)).